The sequence spans 472 residues: Methanethiol oxidase (472 aa).

The protein belongs to the selenium-binding protein family.

It is found in the nucleus. It localises to the cytoplasm. The protein localises to the cytosol. The protein resides in the membrane. The catalysed reaction is methanethiol + O2 + H2O = hydrogen sulfide + formaldehyde + H2O2 + H(+). The protein operates within organosulfur degradation. Functionally, catalyzes the oxidation of methanethiol, an organosulfur compound known to be produced in substantial amounts by gut bacteria. Selenium-binding protein which may be involved in the sensing of reactive xenobiotics in the cytoplasm. May be involved in intra-Golgi protein transport. The sequence is that of Methanethiol oxidase (selenbp1-a) from Xenopus laevis (African clawed frog).